The chain runs to 219 residues: ATP phosphoribosyltransferase (219 aa).

This sequence belongs to the ATP phosphoribosyltransferase family. Short subfamily. As to quaternary structure, heteromultimer composed of HisG and HisZ subunits.

The protein resides in the cytoplasm. The catalysed reaction is 1-(5-phospho-beta-D-ribosyl)-ATP + diphosphate = 5-phospho-alpha-D-ribose 1-diphosphate + ATP. It functions in the pathway amino-acid biosynthesis; L-histidine biosynthesis; L-histidine from 5-phospho-alpha-D-ribose 1-diphosphate: step 1/9. Catalyzes the condensation of ATP and 5-phosphoribose 1-diphosphate to form N'-(5'-phosphoribosyl)-ATP (PR-ATP). Has a crucial role in the pathway because the rate of histidine biosynthesis seems to be controlled primarily by regulation of HisG enzymatic activity. The polypeptide is ATP phosphoribosyltransferase (Syntrophotalea carbinolica (strain DSM 2380 / NBRC 103641 / GraBd1) (Pelobacter carbinolicus)).